We begin with the raw amino-acid sequence, 100 residues long: MANKAMIQRELKRQNLVMKFAKKRAILKQQIQQASSLKEKLALHRKLQQLPRNSSPVRLHNRCLVTGRPKGYFRDFGLSRHVLREMAHEGLLPGVRKASW.

Belongs to the universal ribosomal protein uS14 family. As to quaternary structure, part of the 30S ribosomal subunit.

Its subcellular location is the plastid. It is found in the chloroplast. Functionally, binds 16S rRNA, required for the assembly of 30S particles. This Tetradesmus obliquus (Green alga) protein is Small ribosomal subunit protein uS14c.